The sequence spans 627 residues: 1-deoxy-D-xylulose-5-phosphate synthase (627 aa).

Thiamine diphosphate contacts are provided by residues histidine 87 and 128–130 (GHS). Residue aspartate 159 coordinates Mg(2+). Residues 160–161 (GA), asparagine 188, phenylalanine 295, and glutamate 375 contribute to the thiamine diphosphate site. Residue asparagine 188 participates in Mg(2+) binding.

This sequence belongs to the transketolase family. DXPS subfamily. As to quaternary structure, homodimer. Requires Mg(2+) as cofactor. Thiamine diphosphate serves as cofactor.

The catalysed reaction is D-glyceraldehyde 3-phosphate + pyruvate + H(+) = 1-deoxy-D-xylulose 5-phosphate + CO2. It functions in the pathway metabolic intermediate biosynthesis; 1-deoxy-D-xylulose 5-phosphate biosynthesis; 1-deoxy-D-xylulose 5-phosphate from D-glyceraldehyde 3-phosphate and pyruvate: step 1/1. In terms of biological role, catalyzes the acyloin condensation reaction between C atoms 2 and 3 of pyruvate and glyceraldehyde 3-phosphate to yield 1-deoxy-D-xylulose-5-phosphate (DXP). The polypeptide is 1-deoxy-D-xylulose-5-phosphate synthase (Pseudomonas paraeruginosa (strain DSM 24068 / PA7) (Pseudomonas aeruginosa (strain PA7))).